The sequence spans 211 residues: FMN-dependent NADH:quinone oxidoreductase (211 aa).

17 to 19 (SYS) contributes to the FMN binding site.

The protein belongs to the azoreductase type 1 family. In terms of assembly, homodimer. FMN is required as a cofactor.

It carries out the reaction 2 a quinone + NADH + H(+) = 2 a 1,4-benzosemiquinone + NAD(+). The enzyme catalyses N,N-dimethyl-1,4-phenylenediamine + anthranilate + 2 NAD(+) = 2-(4-dimethylaminophenyl)diazenylbenzoate + 2 NADH + 2 H(+). Quinone reductase that provides resistance to thiol-specific stress caused by electrophilic quinones. Functionally, also exhibits azoreductase activity. Catalyzes the reductive cleavage of the azo bond in aromatic azo compounds to the corresponding amines. The polypeptide is FMN-dependent NADH:quinone oxidoreductase (Bacillus velezensis (strain DSM 23117 / BGSC 10A6 / LMG 26770 / FZB42) (Bacillus amyloliquefaciens subsp. plantarum)).